Consider the following 609-residue polypeptide: UvrABC system protein C (609 aa).

In terms of domain architecture, GIY-YIG spans Ile-19 to Val-97. The UVR domain occupies Glu-208–Phe-243.

This sequence belongs to the UvrC family. Interacts with UvrB in an incision complex.

It is found in the cytoplasm. Functionally, the UvrABC repair system catalyzes the recognition and processing of DNA lesions. UvrC both incises the 5' and 3' sides of the lesion. The N-terminal half is responsible for the 3' incision and the C-terminal half is responsible for the 5' incision. The polypeptide is UvrABC system protein C (Leptospira borgpetersenii serovar Hardjo-bovis (strain JB197)).